The following is a 185-amino-acid chain: Ribosome-recycling factor (185 aa).

Belongs to the RRF family.

Its subcellular location is the cytoplasm. Its function is as follows. Responsible for the release of ribosomes from messenger RNA at the termination of protein biosynthesis. May increase the efficiency of translation by recycling ribosomes from one round of translation to another. This chain is Ribosome-recycling factor, found in Streptococcus agalactiae serotype V (strain ATCC BAA-611 / 2603 V/R).